Here is a 118-residue protein sequence, read N- to C-terminus: Probable mitochondrial pyruvate carrier 2 (118 aa).

The next 3 helical transmembrane spans lie at 19–35, 50–66, and 72–94; these read VHFWAPAMKWTLVLSGI, YAALCATGAIWTRWSLI, and YFNATVNFFLAIVGAVQVSRILV.

This sequence belongs to the mitochondrial pyruvate carrier (MPC) (TC 2.A.105) family. The functional 150 kDa pyruvate import complex is a heteromer of mpc1 and mpc2.

Its subcellular location is the mitochondrion inner membrane. Mediates the uptake of pyruvate into mitochondria. In Schizosaccharomyces pombe (strain 972 / ATCC 24843) (Fission yeast), this protein is Probable mitochondrial pyruvate carrier 2.